Reading from the N-terminus, the 714-residue chain is Protein BLISTER (714 aa).

Disordered stretches follow at residues 1-113 (MASA…VDFS), 219-261 (SSYL…KRSR), 288-325 (VTSSGSQLSGSDGFGPSYISGRRDSNGPSSLTSGASDY), and 519-576 (MVQK…SSNT). Over residues 8-33 (RRQEDVEAGRRKLEQFRKRKAAEKAK) the composition is skewed to basic and acidic residues. Composition is skewed to polar residues over residues 36–50 (SQNTQPVDNSQQSVI) and 58–74 (SISNGPLKQSAESTSNE). A compositionally biased stretch (basic and acidic residues) spans 92-102 (DGSKERSRQDD). Polar residues-rich tracts occupy residues 219–253 (SSYLFNSPDTSSRPSEPSDFSVNITSSSPLNSAKS), 288–297 (VTSSGSQLSG), 313–322 (NGPSSLTSGA), and 519–561 (MVQK…SSNQ). Residues 356-525 (NDDFTALEQH…LQTMVQKASS (170 aa)) are a coiled coil. Over residues 562–576 (ETDSTTLLESDSSNT) the composition is skewed to low complexity.

In terms of assembly, interacts with CLF. Expressed in root tips, emerging lateral roots, shoot apical meristem (SAM), vasculature of cotyledons, leaves, sepals and carpels.

It localises to the nucleus. The protein resides in the cytoplasm. Functionally, is required for normal leaf, flower and seed development and controls cotyledon and leaf patterning by inhibiting premature differentiation. Regulates the expression of a subset of PcG target genes. Is required for the repression of the floral specific genes PI, SEP2, and SEP3, but also for the activation of FLC. Involved in response to cold. Involved in the regulation of COR15A, COR15B, BAM3 and AMY3 transcripts, and ascorbate levels in response to prolonged chilling temperatures. The sequence is that of Protein BLISTER from Arabidopsis thaliana (Mouse-ear cress).